Here is a 354-residue protein sequence, read N- to C-terminus: MNINKKRIAIVLFNLGGPDSLKSVKPFLFNLFYDKAIINLPNPLRYIIAKLISTTREKKSQKIYSLIGGKSPLLEETEKQKLALAENLKQATNEDFNIFINMRYASPKIEETIKQIKEYNPTEVILLPLYPQFSTTTTGSSVKNFLSNFNINIPVKVVCCYPVEENFIKAHTALIKEKIFDKNSRVLFSAHGLPQKIIDAGDPYSFQVEETVKAVVKELNIKDLDYKVTYQSRVGPVEWLKPNTEDEIEIAGKQNKNIIIVPIAFVSEHVETLVELDIEYKLIADKYKIKYNRTPTLSTNKIFIKSLTSILLKFINKKEDDFLVASSNGERICPDKFSKCLCFTSFPPMRESSK.

Residues H191 and E271 each contribute to the Fe cation site.

It belongs to the ferrochelatase family.

The protein resides in the cytoplasm. The catalysed reaction is heme b + 2 H(+) = protoporphyrin IX + Fe(2+). It functions in the pathway porphyrin-containing compound metabolism; protoheme biosynthesis; protoheme from protoporphyrin-IX: step 1/1. Catalyzes the ferrous insertion into protoporphyrin IX. In Rickettsia bellii (strain OSU 85-389), this protein is Ferrochelatase.